The sequence spans 149 residues: Probable flagellum biosynthesis repressor protein FlbT (149 aa).

It belongs to the FlbT family.

Has a post-transcriptional repressor function in flagellum biogenesis. Associates with the 5'-UTR of fljK mRNA and promotes its degradation. The chain is Probable flagellum biosynthesis repressor protein FlbT from Rhizobium johnstonii (strain DSM 114642 / LMG 32736 / 3841) (Rhizobium leguminosarum bv. viciae).